Consider the following 553-residue polypeptide: Arylsulfatase K (553 aa).

The first 16 residues, 1–16 (MLLLLVSVVAALALAA), serve as a signal peptide directing secretion. Residues D40 and C80 each contribute to the Ca(2+) site. The active-site Nucleophile is the C80. C80 bears the 3-oxoalanine (Cys) mark. N-linked (GlcNAc...) asparagine glycosylation is present at N108. Substrate is bound at residue K128. N-linked (GlcNAc...) asparagine glycosylation occurs at N191. H249 serves as a coordination point for substrate. A glycan (N-linked (GlcNAc...) asparagine) is linked at N260. Positions 311 and 312 each coordinate Ca(2+). N373, N411, and N496 each carry an N-linked (GlcNAc...) asparagine glycan. The tract at residues 530-553 (SPLASSPTQSTSGSQPTLPQSTSG) is disordered. A compositionally biased stretch (low complexity) spans 534 to 553 (SSPTQSTSGSQPTLPQSTSG).

The protein belongs to the sulfatase family. Ca(2+) is required as a cofactor. The conversion to 3-oxoalanine (also known as C-formylglycine, FGly), of a serine or cysteine residue in prokaryotes and of a cysteine residue in eukaryotes, is critical for catalytic activity. In terms of processing, the 75-kDa precursor undergoes proteolytic processing to yield a 23 kDa form. Post-translationally, N-glycosylated with both high mannose and complex type sugars.

The protein localises to the secreted. It is found in the lysosome. It carries out the reaction an aryl sulfate + H2O = a phenol + sulfate + H(+). It catalyses the reaction Hydrolysis of the 2-sulfate groups of the 2-O-sulfo-D-glucuronate residues of chondroitin sulfate, heparin and heparitin sulfate.. Catalyzes the hydrolysis of pseudosubstrates such as p-nitrocatechol sulfate and p-nitrophenyl sulfate. Catalyzes the hydrolysis of the 2-sulfate groups of the 2-O-sulfo-D-glucuronate residues of chondroitin sulfate, heparin and heparitin sulfate. Acts selectively on 2-sulfoglucuronate and lacks activity against 2-sulfoiduronate. This chain is Arylsulfatase K (Arsk), found in Mus musculus (Mouse).